The following is a 187-amino-acid chain: Oligoribonuclease (187 aa).

In terms of domain architecture, Exonuclease spans 7–170 (LCWLDMEMTG…DDILESIEEM (164 aa)). Y128 is a catalytic residue.

This sequence belongs to the oligoribonuclease family.

The protein resides in the cytoplasm. 3'-to-5' exoribonuclease specific for small oligoribonucleotides. The protein is Oligoribonuclease of Neisseria meningitidis serogroup C / serotype 2a (strain ATCC 700532 / DSM 15464 / FAM18).